Consider the following 249-residue polypeptide: MSLPSIPSFVLSGLLLICLPFSSFASATTSHISFSYAARQRMQNRARLLKQYQTHLKKQASYIVEGNAESKRALRQHNREQIKQHPEWFPAPLKASDRRWQALAENNHFLSSDHLHNITEVAIHRLEQQLGKPYVWGGTRPDKGFDCSGLVFYAYNKILEAKLPRTANEMYHYRRATIVANNDLRRGDLLFFHIHSREIADHMGVYLGDGQFIESPRTGETIRISRLAEPFWQDHFLGARRILTEETIL.

The N-terminal stretch at 1-17 (MSLPSIPSFVLSGLLLI) is a signal peptide. C18 carries the N-palmitoyl cysteine lipid modification. Residue C18 is the site of S-diacylglycerol cysteine attachment. In terms of domain architecture, NlpC/P60 spans 116-243 (HNITEVAIHR…DHFLGARRIL (128 aa)). Catalysis depends on C147, which acts as the Nucleophile. Catalysis depends on H202, which acts as the Proton acceptor. E214 is a catalytic residue.

This sequence belongs to the peptidase C40 family.

It localises to the cell membrane. The protein is Probable endopeptidase YafL (yafL) of Escherichia coli (strain K12).